A 192-amino-acid chain; its full sequence is Putative BTB/POZ domain-containing protein At4g04090 (192 aa).

Residues 23-96 (VDVRLMARDS…TYSDGSMLSE (74 aa)) form the BTB domain.

It functions in the pathway protein modification; protein ubiquitination. Functionally, may act as a substrate-specific adapter of an E3 ubiquitin-protein ligase complex (CUL3-RBX1-BTB) which mediates the ubiquitination and subsequent proteasomal degradation of target proteins. The protein is Putative BTB/POZ domain-containing protein At4g04090 of Arabidopsis thaliana (Mouse-ear cress).